Reading from the N-terminus, the 340-residue chain is Ketol-acid reductoisomerase (NADP(+)) (340 aa).

A KARI N-terminal Rossmann domain is found at valine 3–threonine 183. NADP(+)-binding positions include phenylalanine 26–glutamine 29, serine 54, and aspartate 84–glutamine 87. Residue histidine 109 is part of the active site. Position 135 (glycine 135) interacts with NADP(+). In terms of domain architecture, KARI C-terminal knotted spans threonine 184–isoleucine 329. Residues aspartate 192, glutamate 196, glutamate 228, and glutamate 232 each contribute to the Mg(2+) site. Serine 253 is a binding site for substrate.

Belongs to the ketol-acid reductoisomerase family. Requires Mg(2+) as cofactor.

The catalysed reaction is (2R)-2,3-dihydroxy-3-methylbutanoate + NADP(+) = (2S)-2-acetolactate + NADPH + H(+). It catalyses the reaction (2R,3R)-2,3-dihydroxy-3-methylpentanoate + NADP(+) = (S)-2-ethyl-2-hydroxy-3-oxobutanoate + NADPH + H(+). It functions in the pathway amino-acid biosynthesis; L-isoleucine biosynthesis; L-isoleucine from 2-oxobutanoate: step 2/4. The protein operates within amino-acid biosynthesis; L-valine biosynthesis; L-valine from pyruvate: step 2/4. Functionally, involved in the biosynthesis of branched-chain amino acids (BCAA). Catalyzes an alkyl-migration followed by a ketol-acid reduction of (S)-2-acetolactate (S2AL) to yield (R)-2,3-dihydroxy-isovalerate. In the isomerase reaction, S2AL is rearranged via a Mg-dependent methyl migration to produce 3-hydroxy-3-methyl-2-ketobutyrate (HMKB). In the reductase reaction, this 2-ketoacid undergoes a metal-dependent reduction by NADPH to yield (R)-2,3-dihydroxy-isovalerate. The chain is Ketol-acid reductoisomerase (NADP(+)) from Campylobacter curvus (strain 525.92).